Consider the following 389-residue polypeptide: Probable inactive purple acid phosphatase 29 (389 aa).

The first 34 residues, 1–34, serve as a signal peptide directing secretion; the sequence is MADNRRRRSLFDFLLFSVFLGLACLCLSPIPATA. N-linked (GlcNAc...) asparagine glycosylation is present at Asn80. Asn136 contributes to the substrate binding site. Asn136 provides a ligand contact to Zn(2+). 2 N-linked (GlcNAc...) asparagine glycosylation sites follow: Asn191 and Asn267. Residue His303 participates in Zn(2+) binding. 303–305 contributes to the substrate binding site; that stretch reads HDH. His305 serves as a coordination point for Fe cation. N-linked (GlcNAc...) asparagine glycosylation occurs at Asn380.

Belongs to the metallophosphoesterase superfamily. Purple acid phosphatase family. As to quaternary structure, homodimer. It depends on Fe cation as a cofactor. Zn(2+) serves as cofactor. Expressed in roots, stems, leaves, flowers and siliques.

It is found in the secreted. The protein is Probable inactive purple acid phosphatase 29 (PAP29) of Arabidopsis thaliana (Mouse-ear cress).